Here is a 720-residue protein sequence, read N- to C-terminus: Exocyst complex component 7 (720 aa).

Coiled-coil stretches lie at residues 5–34 and 63–83; these read EDAS…SLEK and VHKQ…TLSN. S133 carries the phosphoserine modification. The tract at residues 249–268 is disordered; the sequence is SPAVQTKRKETPTKKAPKRP.

The protein belongs to the EXO70 family.

The protein localises to the cytoplasm. It localises to the cytosol. Its subcellular location is the cell membrane. It is found in the midbody. The protein resides in the midbody ring. In terms of biological role, component of the exocyst complex involved in the docking of exocytic vesicles with fusion sites on the plasma membrane. It is required for neuron survival and plays an essential role in telencephalon development. This Danio rerio (Zebrafish) protein is Exocyst complex component 7 (exoc7).